Here is a 524-residue protein sequence, read N- to C-terminus: GMP synthase [glutamine-hydrolyzing] (524 aa).

The Glutamine amidotransferase type-1 domain occupies 9-207 (RILILDFGSQ…VIHICQCIPN (199 aa)). The Nucleophile role is filled by Cys86. Catalysis depends on residues His181 and Glu183. The GMPS ATP-PPase domain occupies 208–399 (WTTKHIIEDS…LGLPADLIYR (192 aa)). 235 to 241 (SGGVDSA) contributes to the ATP binding site.

Homodimer.

The enzyme catalyses XMP + L-glutamine + ATP + H2O = GMP + L-glutamate + AMP + diphosphate + 2 H(+). The protein operates within purine metabolism; GMP biosynthesis; GMP from XMP (L-Gln route): step 1/1. In terms of biological role, catalyzes the synthesis of GMP from XMP. This chain is GMP synthase [glutamine-hydrolyzing], found in Coxiella burnetii (strain RSA 493 / Nine Mile phase I).